The chain runs to 236 residues: Glycoprotein U23 (236 aa).

The first 17 residues, 1–17 (MLFLSFLLVCLCEEVRM), serve as a signal peptide directing secretion. 3 N-linked (GlcNAc...) asparagine; by host glycosylation sites follow: N67, N80, and N103. A helical membrane pass occupies residues 184 to 204 (LVIWIGGISFIGAFVILIVIL).

The protein localises to the membrane. This Human herpesvirus 6A (strain Uganda-1102) (HHV-6 variant A) protein is Glycoprotein U23 (U23).